Consider the following 338-residue polypeptide: tRNA pseudouridine synthase D (338 aa).

D79 acts as the Nucleophile in catalysis. The TRUD domain maps to 154-303 (GVPNYFGEQR…EEAWRANILY (150 aa)).

This sequence belongs to the pseudouridine synthase TruD family.

The catalysed reaction is uridine(13) in tRNA = pseudouridine(13) in tRNA. Responsible for synthesis of pseudouridine from uracil-13 in transfer RNAs. This Legionella pneumophila (strain Lens) protein is tRNA pseudouridine synthase D.